The following is a 156-amino-acid chain: MFARLANPAHFKPLTGSHITRAAKRLYHPKVIDHYTNPRNVGSMDKSLANVGTGIVGAPACGDVIKLQIQVNDKSGIIENVKFKTFGCGSAIASSSYMTELVRGMSLDEAVKIKNTEIAKELSLPPVKLHCSMLAEDAIKAAIKDYKTKRNPSVLH.

A mitochondrion-targeting transit peptide spans M1–L26.

The protein belongs to the NifU family. In terms of assembly, component of the core Fe-S cluster (ISC) assembly machinery. Interacts with frataxin. Interacts with the mitochondrial co-chaperones JAC1 and SSQ1. Interacts with NFS1. Interacts with ferredoxin YAH1; interacts with the reduced form. [2Fe-2S] cluster serves as cofactor.

Its subcellular location is the mitochondrion matrix. It participates in cofactor biosynthesis; iron-sulfur cluster biosynthesis. In terms of biological role, scaffold protein for the de novo synthesis of iron-sulfur (Fe-S) clusters within mitochondria, which is required for maturation of both mitochondrial and cytoplasmic [2Fe-2S] and [4Fe-4S] proteins. First, a [2Fe-2S] cluster is transiently assembled on the scaffold proteins ISU1 and ISU2. In a second step, the cluster is released from ISU1/ISU2, transferred to glutaredoxin GRX5, followed by the formation of mitochondrial [2Fe-2S] proteins, the synthesis of [4Fe-4S] clusters and their target-specific insertion into the recipient apoproteins. Cluster assembly on ISU1/ISU2 depends on the function of the cysteine desulfurase complex NFS1-ISD11, which serves as the sulfur donor for cluster synthesis, the iron-binding protein frataxin (YFH1) as the putative iron donor, and the electron transfer chain comprised of ferredoxin reductase ARH1 and ferredoxin YAH1, which receive their electrons from NADH. Fe-S cluster release from ISU1/ISU2 is achieved by interaction with the Hsp70 chaperone SSQ1, assisted by the DnaJ-like co-chaperone JAC1 and the nucleotide exchange factor MGE1. ISU1 is the major isoform in yeast, while ISU2 is not detectable in cells grown to stationary phase. Also involved in production of a sulfur precursor required for thiolation of cytoplasmic tRNAs. The protein is Iron sulfur cluster assembly protein 2, mitochondrial of Saccharomyces cerevisiae (strain ATCC 204508 / S288c) (Baker's yeast).